The following is a 590-amino-acid chain: Acyl-CoA ligase sidI (590 aa).

A PTS2-type peroxisomal targeting signal motif is present at residues Arg6–Leu14. ATP-binding positions include Thr220–Lys228, Ser359–Thr364, Asp449, and Arg464. Thr364 serves as a coordination point for substrate. Residues Gly472–Glu474 and Tyr543–Phe545 each bind CoA. Lys563 is a binding site for ATP.

This sequence belongs to the ATP-dependent AMP-binding enzyme family.

Its subcellular location is the peroxisome. Its pathway is siderophore biosynthesis. Acyl-CoA ligase; part of the siderophore biosynthetic pathway. Aspergillus fumigatus produces 4 types of siderophores, low-molecular-mass iron chelators, including excreted fusarinine C (FsC) and triacetylfusarinine C (TAFC) for iron uptake and intacellular ferricrocin (FC) for hyphal and hydroxyferricrocin (HFC) for conidial iron distribution and storage. TAFC consists of 3 N(2)-acetyl-N(5)-anhydromevalonyl-N(5)-hydroxyornithine residues cyclically linked by ester bonds; FC is a cyclic hexapeptide with the structure Gly-Ser-Gly-(N(5)-acetyl-N(5)-hydroxyornithine)x3. The biosynthesis of all four siderophores depends on the hydroxylation of ornithine, catalyzed by the monooxygenase sidA. Subsequently, the pathways for biosynthesis of extra- and intracellular siderophores split. For biosynthesis of extracellular siderophores, the transacylase sidF transfers anhydromevalonyl to N(5)-hydroxyornithine. The required anhydromevalonyl-CoA moiety is derived from mevalonate by CoA ligation and dehydration catalyzed by sidI and sidH respectively. The acetylation of N(5)-hydroxyornithine for FC biosynthesis involves the constitutively expressed sidL. FC is hydroxylated to HFC by an as yet uncharacterized enzyme during conidiation. Assembly of fusarinine C (FsC) and FC is catalyzed by two different nonribosomal peptide synthetases (NRPS), sidD and sidC respectively. Subsequently, sidG catalyzes N2-acetylation of FsC for forming TAFC. Both extra- and intracellular siderophores are crucial for growth during iron limitation and virulence. The protein is Acyl-CoA ligase sidI of Aspergillus fumigatus (strain ATCC MYA-4609 / CBS 101355 / FGSC A1100 / Af293) (Neosartorya fumigata).